The following is a 1820-amino-acid chain: MPGARSEAGGVDNPLVLDSSDSDDNLSGLPLNGRVKRIDGNDRSYKKKSLTSMRKSTVVDLTLSDSDEAVESVNLLPGSSSTPDRAAQAGISDKQPSLRRRPRPFMSIADSSSPPENQNVISFLGNHSQEIGELPSPPLVEDRAAPNKMELGGENIAGQNNEANAAQAAVPVSGTPSLTLSSNRPQSVSGAQLVVASSSRSAINSPPRRTPSIPQQSPSSRATPCRSASIASSRSRPPTPPLPATQSTPVTVSRRLASPILSPVQAVSSAIISPTIPSIPSHASLSDPTILSPPSATSAPPNSPIPSTSTTVQTPAAALTYARPSTSAAPLPVMPISVTPATTSPAGPGPSALQSASEATKSSDQKESPRKTNSKQPSSPSSTHGRWTDTRLFHTPSNLSATSGKSSAASSRSKSRAPLSSRAAMSDNVAGPSKTTSVSSTHPPSRASPSSLPSQSQRQVHPRPPSRDGVGKREKKSKTLSSGTGQSTPSKFSLPTSDVASNQKNKSTGLNALPKKPSSTPTSSIPQRTSTLATAMAIRPFVRSPTPPSPQSSSEASRSIQTSRGAVKAAQNQDKIHPLSTALSISSHSREATTKATTLFHTTSSPPSPSQSTSAPTKSHVVWNAQKLGTTVLSSERIHLSRGKSQTSDSVVAPAASQTAASLSYPAGTSGGAREADKKAVETSFHAGPSSADFEAFVQPSTSAIAPTTVRPSVAPPEDAPVLKSGSIIHPLFRAASAIGDQNAFTKTEAVGDVLSQGSKGRASSPRITTTGAVSHLAPHVDLGSKIKPTAAPSLFASGVTTKNVDDQDSAQPQNQTPLPSAISVSSKKNHGSLSKESSIKSAASFISSSSTLGDSVSGLGRKSHHKSTQSMPQSPLPTTNTNNSSGIEVNSWLNPQPFGPSFAASHLSIHAKKKWKERERGKEREKEKVREKEKAEEENEQLRQRRIADLEKLSANLELYKRRMDVESRTRSIPRADGETRKRPPSPGISVSTDAEVRVVKRSKPTWAIAPEGGHVAPAMEKESANVNKKAADAIKINHQPASSYAPAFATPASPAKATRTPLSVTAGLGPPVNSSSSTSTPSLLSRSINLGILRDKPKDHMDDDDGDDSAGGLPVRKTGKNGAVEEQVEQVRLDLDDVSIHGSSPAAPLSIFTSRFRDVSITPSRIQKTLEESDNDVPIQRYAVKVNGKQKAQRSKDKSYGSESENDVPLNWPSRKGKGRTAPEPQDSSETQRDDDDVNLGSGDGEERPSDDDSIPVPPAPLFKDRTAHVRQPLQTLFKGGIVAKHSYQRPLAKASAVSPVPSANRPSPAPSAKADLLPQKRKRRLKKITSQQWQHIAQNSLSDVDDLLGESSKKRLSPENAEKLGADLSKLTRPRVFSIVSRSEPRTKREPIEEDNNEYFTDSDSHTSDVALFSQHPDPPPPPERIREAKRNFDTRNIDPWNRQKHTFRSNPALHRAIFEAYIMQSTSMEESGGDDIKVTNDVDADGGPPDFEFVYSDTMLYPDGIPPPELGLGCDCDGPCDPDSETCTCVKRQELYFYDLGLKGFAYDENGKIRENSASIWECNELCGCPPECMNRVIQRGRARDTGIEIFKTKEKGWGIRARSFIPSGTYIGSYTGELIREAESERRGVTYTAIGRTYVFDLDGWQIRHPPKGLEKIDKRAAELAEAVKMRARAAMRESQEDAYNAYSVDAFHYGNFTRYFNHSCDPNLAITQAYVKDFHPERPLLVIFTRRDIKKHEELCISYKGIPDDDDIPSPEPVKKKKGGKGKKQMSKTSASAHPPEMTALNSDKGLVEVKDICRCGAKNCDGRMFNYGP.

12 disordered regions span residues 1 to 54, 74 to 251, 284 to 618, 634 to 681, 804 to 836, 850 to 893, 911 to 944, 966 to 996, 1063 to 1126, 1183 to 1270, 1296 to 1335, and 1385 to 1407; these read MPGA…TSMR, NLLP…TPVT, SLSD…APTK, SSER…KKAV, NVDD…SLSK, SSTL…VNSW, HAKK…EQLR, DVES…STDA, PLSV…NGAV, RYAV…DRTA, KASA…TSQQ, and RSEP…TDSD. Residues 11–31 are compositionally biased toward low complexity; sequence VDNPLVLDSSDSDDNLSGLPL. Over residues 109–129 the composition is skewed to polar residues; that stretch reads ADSSSPPENQNVISFLGNHSQ. Low complexity predominate over residues 152–169; that stretch reads GGENIAGQNNEANAAQAA. Composition is skewed to polar residues over residues 174–204 and 212–222; these read GTPS…SAIN and SIPQQSPSSRA. 3 stretches are compositionally biased toward low complexity: residues 226-236, 284-311, and 339-352; these read RSASIASSRSR, SLSD…TSTT, and TPAT…GPSA. Over residues 361–370 the composition is skewed to basic and acidic residues; that stretch reads KSSDQKESPR. A compositionally biased stretch (polar residues) spans 374 to 385; sequence SKQPSSPSSTHG. The span at 400–424 shows a compositional bias: low complexity; it reads SATSGKSSAASSRSKSRAPLSSRAA. The segment covering 433-442 has biased composition (polar residues); the sequence is SKTTSVSSTH. Residues 443-459 show a composition bias toward low complexity; it reads PPSRASPSSLPSQSQRQ. Positions 479 to 510 are enriched in polar residues; that stretch reads TLSSGTGQSTPSKFSLPTSDVASNQKNKSTGL. 3 stretches are compositionally biased toward low complexity: residues 514–531, 551–563, and 594–618; these read PKKP…RTST, QSSS…IQTS, and TKAT…APTK. 2 stretches are compositionally biased toward polar residues: residues 643–662 and 810–827; these read GKSQ…TAAS and SAQP…SVSS. Over residues 850–861 the composition is skewed to low complexity; sequence SSTLGDSVSGLG. Residues 869–893 are compositionally biased toward polar residues; the sequence is TQSMPQSPLPTTNTNNSSGIEVNSW. Composition is skewed to basic and acidic residues over residues 917-944 and 966-983; these read KERE…EQLR and DVES…ETRK. Residues 1076–1089 are compositionally biased toward low complexity; it reads SSSSTSTPSLLSRS. Positions 1296–1320 are enriched in low complexity; the sequence is KASAVSPVPSANRPSPAPSAKADLL. Positions 1516 to 1585 constitute a Pre-SET domain; it reads LGCDCDGPCD…ECMNRVIQRG (70 aa). 9 residues coordinate Zn(2+): C1518, C1520, C1524, C1531, C1533, C1567, C1571, C1573, and C1577. Positions 1590–1750 constitute an SET domain; it reads TGIEIFKTKE…KHEELCISYK (161 aa). S-adenosyl-L-methionine-binding positions include 1600 to 1602, Y1643, R1704, and 1707 to 1708; these read KGW and NH. A Zn(2+)-binding site is contributed by C1710. Positions 1756–1794 are disordered; it reads DDIPSPEPVKKKKGGKGKKQMSKTSASAHPPEMTALNSD. A compositionally biased stretch (basic residues) spans 1765 to 1776; it reads KKKKGGKGKKQM. The Post-SET domain maps to 1800-1816; the sequence is VKDICRCGAKNCDGRMF. Zn(2+) is bound by residues C1804, C1806, and C1811.

It belongs to the class V-like SAM-binding methyltransferase superfamily. Histone-lysine methyltransferase family. Suvar3-9 subfamily.

It is found in the nucleus. It localises to the chromosome. The enzyme catalyses N(6)-methyl-L-lysyl(9)-[histone H3] + S-adenosyl-L-methionine = N(6),N(6)-dimethyl-L-lysyl(9)-[histone H3] + S-adenosyl-L-homocysteine + H(+). The catalysed reaction is L-lysyl(9)-[histone H3] + S-adenosyl-L-methionine = N(6)-methyl-L-lysyl(9)-[histone H3] + S-adenosyl-L-homocysteine + H(+). Histone methyltransferase that specifically dimethylates histone H3 to form H3K9me2. H3K9me2 represents a specific tag for epigenetic transcriptional repression by recruiting HP1 proteins to methylated histones. Mainly functions in heterochromatin regions, thereby playing a central role in the establishment of constitutive heterochromatin at centromeric regions. The chain is Histone-lysine N-methyltransferase, H3 lysine-9 specific from Cryptococcus neoformans var. grubii serotype A (strain H99 / ATCC 208821 / CBS 10515 / FGSC 9487) (Filobasidiella neoformans var. grubii).